The sequence spans 87 residues: Small ribosomal subunit protein uS15 (87 aa).

It belongs to the universal ribosomal protein uS15 family. As to quaternary structure, part of the 30S ribosomal subunit. Forms a bridge to the 50S subunit in the 70S ribosome, contacting the 23S rRNA.

Functionally, one of the primary rRNA binding proteins, it binds directly to 16S rRNA where it helps nucleate assembly of the platform of the 30S subunit by binding and bridging several RNA helices of the 16S rRNA. Its function is as follows. Forms an intersubunit bridge (bridge B4) with the 23S rRNA of the 50S subunit in the ribosome. The sequence is that of Small ribosomal subunit protein uS15 from Acetivibrio thermocellus (strain ATCC 27405 / DSM 1237 / JCM 9322 / NBRC 103400 / NCIMB 10682 / NRRL B-4536 / VPI 7372) (Clostridium thermocellum).